We begin with the raw amino-acid sequence, 313 residues long: Formimidoylglutamase (313 aa).

His130, Asp155, His157, Asp159, Asp241, and Asp243 together coordinate Mn(2+).

It belongs to the arginase family. The cofactor is Mn(2+).

It catalyses the reaction N-formimidoyl-L-glutamate + H2O = formamide + L-glutamate. It participates in amino-acid degradation; L-histidine degradation into L-glutamate; L-glutamate from N-formimidoyl-L-glutamate (hydrolase route): step 1/1. Functionally, catalyzes the conversion of N-formimidoyl-L-glutamate to L-glutamate and formamide. The protein is Formimidoylglutamase of Salmonella paratyphi A (strain ATCC 9150 / SARB42).